Consider the following 388-residue polypeptide: Carbamoyl phosphate synthase small chain (388 aa).

A CPSase region spans residues 1–192 (MPLSDAMPAL…FNPDGTVKNG (192 aa)). Residues S51, G244, and G246 each coordinate L-glutamine. One can recognise a Glutamine amidotransferase type-1 domain in the interval 196-382 (TVVALDFGVK…VHQMRTTKQA (187 aa)). C272 serves as the catalytic Nucleophile. L-glutamine contacts are provided by M273, Q276, N312, and F315. Catalysis depends on residues H355 and E357.

Belongs to the CarA family. Composed of two chains; the small (or glutamine) chain promotes the hydrolysis of glutamine to ammonia, which is used by the large (or ammonia) chain to synthesize carbamoyl phosphate. Tetramer of heterodimers (alpha,beta)4.

It catalyses the reaction hydrogencarbonate + L-glutamine + 2 ATP + H2O = carbamoyl phosphate + L-glutamate + 2 ADP + phosphate + 2 H(+). The catalysed reaction is L-glutamine + H2O = L-glutamate + NH4(+). It functions in the pathway amino-acid biosynthesis; L-arginine biosynthesis; carbamoyl phosphate from bicarbonate: step 1/1. It participates in pyrimidine metabolism; UMP biosynthesis via de novo pathway; (S)-dihydroorotate from bicarbonate: step 1/3. Small subunit of the glutamine-dependent carbamoyl phosphate synthetase (CPSase). CPSase catalyzes the formation of carbamoyl phosphate from the ammonia moiety of glutamine, carbonate, and phosphate donated by ATP, constituting the first step of 2 biosynthetic pathways, one leading to arginine and/or urea and the other to pyrimidine nucleotides. The small subunit (glutamine amidotransferase) binds and cleaves glutamine to supply the large subunit with the substrate ammonia. The sequence is that of Carbamoyl phosphate synthase small chain from Nostoc sp. (strain PCC 7120 / SAG 25.82 / UTEX 2576).